We begin with the raw amino-acid sequence, 194 residues long: Prostaglandin-H2 D-isomerase (194 aa).

The N-terminal stretch at 1–24 (MAASHTLWMGLVLLGVLGVLQTRA) is a signal peptide. A Pyrrolidone carboxylic acid modification is found at Gln25. Asn51 carries an N-linked (GlcNAc...) asparagine glycan. Cys65 functions as the Nucleophile in the catalytic mechanism. Residue Asn78 is glycosylated (N-linked (GlcNAc...) asparagine). Cys89 and Cys189 are joined by a disulfide.

This sequence belongs to the calycin superfamily. Lipocalin family. In terms of assembly, monomer. In the male reproductive system, it is expressed in the testis and epididymis, and is secreted into the seminal fluid.

Its subcellular location is the rough endoplasmic reticulum. It is found in the nucleus membrane. The protein localises to the golgi apparatus. It localises to the cytoplasm. The protein resides in the perinuclear region. Its subcellular location is the secreted. It catalyses the reaction prostaglandin H2 = prostaglandin D2. Functionally, catalyzes the conversion of PGH2 to PGD2, a prostaglandin involved in smooth muscle contraction/relaxation and a potent inhibitor of platelet aggregation. Involved in a variety of CNS functions, such as sedation, NREM sleep and PGE2-induced allodynia, and may have an anti-apoptotic role in oligodendrocytes. Binds small non-substrate lipophilic molecules, including biliverdin, bilirubin, retinal, retinoic acid and thyroid hormone, and may act as a scavenger for harmful hydrophobic molecules and as a secretory retinoid and thyroid hormone transporter. Possibly involved in development and maintenance of the blood-brain, blood-retina, blood-aqueous humor and blood-testis barrier. It is likely to play important roles in both maturation and maintenance of the central nervous system and male reproductive system. Involved in PLA2G3-dependent maturation of mast cells. PLA2G3 is secreted by immature mast cells and acts on nearby fibroblasts upstream to PTDGS to synthesize PGD2, which in turn promotes mast cell maturation and degranulation via PTGDR. The sequence is that of Prostaglandin-H2 D-isomerase (PTGDS) from Equus caballus (Horse).